Reading from the N-terminus, the 545-residue chain is Glucans biosynthesis protein G (545 aa).

The signal sequence occupies residues 1 to 34 (MVSLLRCQSFKPSSSLICSLALSAAFALSSSAFA). Residues 38–60 (KPAENKPATPVVSPPKATAQPAN) are disordered.

It belongs to the OpgD/OpgG family.

It localises to the periplasm. Its pathway is glycan metabolism; osmoregulated periplasmic glucan (OPG) biosynthesis. Involved in the biosynthesis of osmoregulated periplasmic glucans (OPGs). This is Glucans biosynthesis protein G from Shewanella sp. (strain MR-4).